Here is a 437-residue protein sequence, read N- to C-terminus: Epsilon-sarcoglycan (437 aa).

Residues 1–317 are Extracellular-facing; sequence MQLPRWWELG…LKSRDYYTDF (317 aa). An N-linked (GlcNAc...) asparagine glycan is attached at N200. The chain crosses the membrane as a helical span at residues 318–338; the sequence is LITLAVPSAVALVLFLILAYI. Residues 339–437 are Cytoplasmic-facing; sequence MCCRREGVEK…QQQTTGKWYP (99 aa).

The protein belongs to the sarcoglycan alpha/epsilon family. Post-translationally, N-glycosylated. In terms of processing, ubiquitinated, leading to its degradation by the proteasome.

The protein localises to the cell membrane. The protein resides in the sarcolemma. It is found in the cytoplasm. It localises to the cytoskeleton. Its subcellular location is the cell projection. The protein localises to the dendrite. The protein resides in the golgi apparatus. Component of the sarcoglycan complex, a subcomplex of the dystrophin-glycoprotein complex which forms a link between the F-actin cytoskeleton and the extracellular matrix. The polypeptide is Epsilon-sarcoglycan (Macaca fascicularis (Crab-eating macaque)).